Consider the following 326-residue polypeptide: uncharacterized protein (326 aa).

Tyr53 serves as the catalytic Proton donor. 215–225 (SPLAGGLLGGK) provides a ligand contact to NADP(+). A coiled-coil region spans residues 242–305 (IEKHRLQLEK…AVEISLDKEI (64 aa)).

The protein belongs to the aldo/keto reductase family. Aldo/keto reductase 2 subfamily.

This is an uncharacterized protein from Bacillus subtilis (strain 168).